Consider the following 241-residue polypeptide: Viral CASP8 and FADD-like apoptosis regulator (241 aa).

2 consecutive DED domains span residues Pro8 to Gly78 and Arg95 to Glu175. The tract at residues Cys212–Thr241 is disordered. Residues Val229–Thr241 are compositionally biased toward polar residues.

In terms of assembly, associates with the death-inducing signaling complex (DISC) formed by TNFRSF6/FAS, FADD and CASP8. Interacts with FADD. Interacts with host TRAF2. Interacts with host NEMO/IKBKG (via N-terminus). Interacts with host SH3BP4; this interaction plays an important in the suppression of host autophagy.

The protein resides in the host cytoplasm. It is found in the host nucleus. Inhibits TNFRSF1A, TNFRSF6/FAS and TNFRSF12 induced apoptosis. Directs the degradation of host NFKBIB but not NFKBIA. Also suppresses host NF-kappa-B activation by interacting with and preventing ubiquitination of host NEMO/IKBKG, the NF-kappa-B essential modulator subunit of the IKK complex. Interferes with host CASP8/caspase-8 recruitment and activation at the death-inducing signaling complex (DISC). May lead to higher virus production and contribute to virus persistence and oncogenicity. Also participates in the inhibition of host autophagy by interacting with host SH3BP4. The polypeptide is Viral CASP8 and FADD-like apoptosis regulator (Homo sapiens (Human)).